Reading from the N-terminus, the 639-residue chain is Protein P1 (639 aa).

Positions 1 to 20 are cleaved as a signal peptide; the sequence is MNRFTAYAALFFIFSLCSTA. Helical transmembrane passes span 121–141, 144–164, and 172–192; these read AASVTLWAIISIWFGLYWTLA, ITLFLWTFSIEALCLILLGCI, and ALSLSEHLPVFLFMSPLKIIW. Residues 207–399 form the Peptidase S39 domain; it reads VEGYKGFSVP…GITSPNYVFE (193 aa). Residues His-255, Asp-286, and Ser-354 each act as for protease activity in the active site. Disordered stretches follow at residues 456-510 and 542-639; these read TNAP…AAIS and VSQK…NSKA. Positions 463 to 487 are enriched in polar residues; it reads TAQTNSAEKTAPSTSAEKTAPTNKP. Positions 551–561 are enriched in basic residues; that stretch reads KQNKRGRRGGK. A compositionally biased stretch (polar residues) spans 562–576; the sequence is NKQNNLPPTSTQSIS.

The protein belongs to the peptidase S39B family. Specific enzymatic cleavages in vivo yield mature proteins. The protease probably cleaves itself and releases the VPg protein. The VPg protein is probably further cleaved in its C-terminus.

The protein resides in the membrane. Its function is as follows. Precursor from which the VPg molecule is probably released at the onset of the RNA synthesis. Essential for virus replication. The polypeptide is Protein P1 (Solanum tuberosum (Potato)).